The sequence spans 116 residues: G antigen 2B/2C (116 aa).

The segment at 1 to 116 is disordered; it reads MSWRGRSTYR…PEEGEKQSQC (116 aa). Acidic residues-rich tracts occupy residues 31–44 and 86–95; these read FSDE…EEGE and ECEDGPDGQE. The segment covering 102-116 has biased composition (basic and acidic residues); sequence EEVKTPEEGEKQSQC.

This sequence belongs to the GAGE family. As to expression, expressed in a variety of tumor tissues but not in normal tissues, except testis.

Its function is as follows. Antigen, recognized on melanoma by autologous cytolytic T-lymphocytes. The sequence is that of G antigen 2B/2C (GAGE2B) from Homo sapiens (Human).